A 536-amino-acid chain; its full sequence is Phosphoenolpyruvate carboxykinase (ATP) (536 aa).

Substrate contacts are provided by R61, Y195, and K201. ATP-binding positions include K201, H220, and 236 to 244; that span reads GLSGTGKTT. Positions 201 and 220 each coordinate Mn(2+). D257 is a binding site for Mn(2+). The ATP site is built by E285, R323, and T448. R323 serves as a coordination point for substrate.

This sequence belongs to the phosphoenolpyruvate carboxykinase (ATP) family. Requires Mn(2+) as cofactor.

It localises to the cytoplasm. It carries out the reaction oxaloacetate + ATP = phosphoenolpyruvate + ADP + CO2. Its pathway is carbohydrate biosynthesis; gluconeogenesis. Involved in the gluconeogenesis. Catalyzes the conversion of oxaloacetate (OAA) to phosphoenolpyruvate (PEP) through direct phosphoryl transfer between the nucleoside triphosphate and OAA. The protein is Phosphoenolpyruvate carboxykinase (ATP) of Methylobacterium nodulans (strain LMG 21967 / CNCM I-2342 / ORS 2060).